A 55-amino-acid chain; its full sequence is uncharacterized protein (55 aa).

This is an uncharacterized protein from Bacillus subtilis (strain 168).